The following is a 596-amino-acid chain: Uptake hydrogenase large subunit (596 aa).

Ni(2+) contacts are provided by cysteine 75, cysteine 78, cysteine 575, and cysteine 578.

It belongs to the [NiFe]/[NiFeSe] hydrogenase large subunit family. In terms of assembly, heterodimer of a large and a small subunit. The cofactor is Ni(2+).

Its subcellular location is the cell membrane. It carries out the reaction H2 + A = AH2. Functionally, this enzyme recycles the H(2) produced by nitrogenase to increase the production of ATP and to protect nitrogenase against inhibition or damage by O(2) under carbon- or phosphate-limited conditions. The sequence is that of Uptake hydrogenase large subunit (hupB) from Bradyrhizobium diazoefficiens (strain JCM 10833 / BCRC 13528 / IAM 13628 / NBRC 14792 / USDA 110).